Consider the following 217-residue polypeptide: Ribose-5-phosphate isomerase A (217 aa).

Residues 28-31 (TGST), 81-84 (DGAD), and 94-97 (KGGG) each bind substrate. Residue Glu-103 is the Proton acceptor of the active site. Lys-121 contributes to the substrate binding site.

This sequence belongs to the ribose 5-phosphate isomerase family. As to quaternary structure, homodimer.

It carries out the reaction aldehydo-D-ribose 5-phosphate = D-ribulose 5-phosphate. It participates in carbohydrate degradation; pentose phosphate pathway; D-ribose 5-phosphate from D-ribulose 5-phosphate (non-oxidative stage): step 1/1. Its function is as follows. Catalyzes the reversible conversion of ribose-5-phosphate to ribulose 5-phosphate. This chain is Ribose-5-phosphate isomerase A, found in Aeromonas salmonicida (strain A449).